Consider the following 208-residue polypeptide: Thymidylate kinase (208 aa).

An ATP-binding site is contributed by 9–16; sequence GGEGCGKS.

This sequence belongs to the thymidylate kinase family.

The catalysed reaction is dTMP + ATP = dTDP + ADP. In terms of biological role, phosphorylation of dTMP to form dTDP in both de novo and salvage pathways of dTTP synthesis. This Dehalococcoides mccartyi (strain ATCC BAA-2100 / JCM 16839 / KCTC 5957 / BAV1) protein is Thymidylate kinase.